The primary structure comprises 505 residues: Glutamate--tRNA ligase (505 aa).

The 'HIGH' region signature appears at 12 to 22 (PSPTGDPHVGT). The 'KMSKS' region motif lies at 253 to 257 (KLSKR). Lysine 256 serves as a coordination point for ATP.

Belongs to the class-I aminoacyl-tRNA synthetase family. Glutamate--tRNA ligase type 1 subfamily. As to quaternary structure, monomer.

It is found in the cytoplasm. It catalyses the reaction tRNA(Glu) + L-glutamate + ATP = L-glutamyl-tRNA(Glu) + AMP + diphosphate. Catalyzes the attachment of glutamate to tRNA(Glu) in a two-step reaction: glutamate is first activated by ATP to form Glu-AMP and then transferred to the acceptor end of tRNA(Glu). The polypeptide is Glutamate--tRNA ligase (Chlamydia felis (strain Fe/C-56) (Chlamydophila felis)).